A 372-amino-acid chain; its full sequence is Queuine tRNA-ribosyltransferase (372 aa).

Residue D89 is the Proton acceptor of the active site. Substrate is bound by residues 89 to 93 (DSGGF), D161, and G232. Positions 262-268 (GIGDLPS) are RNA binding. The active-site Nucleophile is the D281. The tract at residues 286–290 (TKAAR) is RNA binding; important for wobble base 34 recognition. Zn(2+) contacts are provided by C319, C321, C324, and H351.

The protein belongs to the queuine tRNA-ribosyltransferase family. Homodimer. Within each dimer, one monomer is responsible for RNA recognition and catalysis, while the other monomer binds to the replacement base PreQ1. Zn(2+) serves as cofactor.

The catalysed reaction is 7-aminomethyl-7-carbaguanine + guanosine(34) in tRNA = 7-aminomethyl-7-carbaguanosine(34) in tRNA + guanine. It functions in the pathway tRNA modification; tRNA-queuosine biosynthesis. Functionally, catalyzes the base-exchange of a guanine (G) residue with the queuine precursor 7-aminomethyl-7-deazaguanine (PreQ1) at position 34 (anticodon wobble position) in tRNAs with GU(N) anticodons (tRNA-Asp, -Asn, -His and -Tyr). Catalysis occurs through a double-displacement mechanism. The nucleophile active site attacks the C1' of nucleotide 34 to detach the guanine base from the RNA, forming a covalent enzyme-RNA intermediate. The proton acceptor active site deprotonates the incoming PreQ1, allowing a nucleophilic attack on the C1' of the ribose to form the product. After dissociation, two additional enzymatic reactions on the tRNA convert PreQ1 to queuine (Q), resulting in the hypermodified nucleoside queuosine (7-(((4,5-cis-dihydroxy-2-cyclopenten-1-yl)amino)methyl)-7-deazaguanosine). In Chlamydia pneumoniae (Chlamydophila pneumoniae), this protein is Queuine tRNA-ribosyltransferase.